We begin with the raw amino-acid sequence, 399 residues long: Ribose-phosphate pyrophosphokinase 2, chloroplastic (399 aa).

The N-terminal 32 residues, 1–32 (MAAKAAALSSSPFVSSRRLSSPAASLRARTPR), are a transit peptide targeting the chloroplast. Asp214, His216, Asp225, and Asp229 together coordinate Mg(2+). The binding of phosphoribosylpyrophosphate stretch occupies residues 299–314 (GKVAIMVDDMIDTAGT).

The protein belongs to the ribose-phosphate pyrophosphokinase family. It depends on Mg(2+) as a cofactor.

The protein localises to the plastid. Its subcellular location is the chloroplast. The enzyme catalyses D-ribose 5-phosphate + ATP = 5-phospho-alpha-D-ribose 1-diphosphate + AMP + H(+). The polypeptide is Ribose-phosphate pyrophosphokinase 2, chloroplastic (Oryza sativa subsp. japonica (Rice)).